Consider the following 332-residue polypeptide: Small ribosomal subunit protein uS2 (332 aa).

Belongs to the universal ribosomal protein uS2 family.

The protein is Small ribosomal subunit protein uS2 of Nitrobacter winogradskyi (strain ATCC 25391 / DSM 10237 / CIP 104748 / NCIMB 11846 / Nb-255).